The following is a 291-amino-acid chain: uncharacterized protein (291 aa).

Disordered stretches follow at residues 1–62, 220–242, and 255–291; these read MELR…SSKK, PLPA…TDKV, and ENNK…SRKK. Positions 18–41 are enriched in basic and acidic residues; it reads EPAKNKSERSIESNERVGTREAKS. Polar residues-rich tracts occupy residues 42–58 and 226–236; these read ENTS…ATTD and PSLNLSPQKVP. Position 267 is a phosphoserine (Ser267).

Its subcellular location is the cytoplasm. It is found in the nucleus. This is an uncharacterized protein from Saccharomyces cerevisiae (strain ATCC 204508 / S288c) (Baker's yeast).